A 631-amino-acid polypeptide reads, in one-letter code: MATWNRPHPRQPVAPEPAAEDDSQQPLGRELSEANRFAYAALCGFSLSQLFPEPEQSSFCTEFVTGLVKWLHLSESVLPTIMAFASGLGGEGADIFAQTLLQDPILRDNPSAVSQDLLSFSLKNGHYDARARVLVCHVTSLLQVPMEELDILEEVFLESLKDAKEEESETAEASRKRKEKRRKWKRYLLIGLATVGGGTVIGVTGGLAAPLVAAGAATIIGSAGAAALGSVAGIAVMTSLFGAAGAGLTGYKMKKRVGAIEEFMFLPLTEGRQLHITIAITGWLGSGRYRTFNAPWMALARSQEQYCLAWEAKYLMELGNALETILSGLANMVAQEALKYTVLSGIVAALTWPASLLSVANVIDNPWGVCLHRSAEVGKHLAHILLSRQQGRRPVTLIGFSLGARVIYFCLQEMAQEQDCQGIIEDVVLLGAPVEGDPKHWEPFRNVVSGRIINGYCRGDWLLSFVYRTSSVQLRVAGLQPVLLQDRRMENVDLTSVVNGHLDYAKQMDAILKVVGIRTKPGWREKGLPLAPGSLPQEEPLQTAIVSTDEIILQDGQSQGPASEDSLKTTIPSSASQAQMPAGLNQSTEDSLSTAAAPAEGHLICSHGVGPNPLGCPDCTHGTQESCTELD.

The segment at 1 to 27 is disordered; it reads MATWNRPHPRQPVAPEPAAEDDSQQPL. Residues 156–183 adopt a coiled-coil conformation; sequence FLESLKDAKEEESETAEASRKRKEKRRK. A run of 3 helical transmembrane segments spans residues 200 to 220, 228 to 248, and 343 to 363; these read VIGV…ATII, LGSV…GAGL, and LSGI…ANVI. The segment at 555 to 595 is disordered; the sequence is DGQSQGPASEDSLKTTIPSSASQAQMPAGLNQSTEDSLSTA. A compositionally biased stretch (polar residues) spans 568–594; the sequence is KTTIPSSASQAQMPAGLNQSTEDSLST.

This sequence belongs to the TMCO4 family.

It localises to the membrane. This chain is Transmembrane and coiled-coil domain-containing protein 4 (Tmco4), found in Mus musculus (Mouse).